The chain runs to 84 residues: Small ribosomal subunit protein bS18A (84 aa).

The protein belongs to the bacterial ribosomal protein bS18 family. Part of the 30S ribosomal subunit. Forms a tight heterodimer with protein bS6.

Its function is as follows. Binds as a heterodimer with protein bS6 to the central domain of the 16S rRNA, where it helps stabilize the platform of the 30S subunit. This Frankia alni (strain DSM 45986 / CECT 9034 / ACN14a) protein is Small ribosomal subunit protein bS18A.